A 308-amino-acid chain; its full sequence is Oxygen-dependent coproporphyrinogen-III oxidase (308 aa).

Serine 100 is a binding site for substrate. 2 residues coordinate a divalent metal cation: histidine 104 and histidine 114. The active-site Proton donor is histidine 114. 116–118 (NFR) is a substrate binding site. The a divalent metal cation site is built by histidine 153 and histidine 183. The interval 248-283 (YVEFNLVFDRGTIFGLQSGGRTESILSSMPPMATWK) is important for dimerization. Residue 266–268 (GGR) coordinates substrate.

Belongs to the aerobic coproporphyrinogen-III oxidase family. As to quaternary structure, homodimer. It depends on a divalent metal cation as a cofactor.

The protein resides in the cytoplasm. It catalyses the reaction coproporphyrinogen III + O2 + 2 H(+) = protoporphyrinogen IX + 2 CO2 + 2 H2O. It participates in porphyrin-containing compound metabolism; protoporphyrin-IX biosynthesis; protoporphyrinogen-IX from coproporphyrinogen-III (O2 route): step 1/1. In terms of biological role, involved in the heme biosynthesis. Catalyzes the aerobic oxidative decarboxylation of propionate groups of rings A and B of coproporphyrinogen-III to yield the vinyl groups in protoporphyrinogen-IX. The protein is Oxygen-dependent coproporphyrinogen-III oxidase of Francisella tularensis subsp. holarctica (strain LVS).